The following is a 220-amino-acid chain: Protein GrpE (220 aa).

The segment at 1–55 (MCGGDVQGQGVASGCDEALERADSLRASDPVPVESGEGSVPGEHSQELETGASEE) is disordered.

This sequence belongs to the GrpE family. In terms of assembly, homodimer.

Its subcellular location is the cytoplasm. Its function is as follows. Participates actively in the response to hyperosmotic and heat shock by preventing the aggregation of stress-denatured proteins, in association with DnaK and GrpE. It is the nucleotide exchange factor for DnaK and may function as a thermosensor. Unfolded proteins bind initially to DnaJ; upon interaction with the DnaJ-bound protein, DnaK hydrolyzes its bound ATP, resulting in the formation of a stable complex. GrpE releases ADP from DnaK; ATP binding to DnaK triggers the release of the substrate protein, thus completing the reaction cycle. Several rounds of ATP-dependent interactions between DnaJ, DnaK and GrpE are required for fully efficient folding. The sequence is that of Protein GrpE from Treponema pallidum (strain Nichols).